A 64-amino-acid polypeptide reads, in one-letter code: DNA gyrase inhibitor YacG (64 aa).

4 residues coordinate Zn(2+): C10, C13, C29, and C33.

This sequence belongs to the DNA gyrase inhibitor YacG family. Interacts with GyrB. Requires Zn(2+) as cofactor.

Functionally, inhibits all the catalytic activities of DNA gyrase by preventing its interaction with DNA. Acts by binding directly to the C-terminal domain of GyrB, which probably disrupts DNA binding by the gyrase. The polypeptide is DNA gyrase inhibitor YacG (Pectobacterium carotovorum subsp. carotovorum (strain PC1)).